The following is a 1231-amino-acid chain: MRLLAKIICLMLWAICVAEDCNELPPRRNTEILTGSWSDQTYPEGTQAIYKCRPGYRSLGNVIMVCRKGEWVALNPLRKCQKRPCGHPGDTPFGTFTLTGGNVFEYGVKAVYTCNEGYQLLGEINYRECDTDGWTNDIPICEVVKCLPVTAPENGKIVSSAMEPDREYHFGQAVRFVCNSGYKIEGDEEMHCSDDGFWSKEKPKCVEISCKSPDVINGSPISQKIIYKENERFQYKCNMGYEYSERGDAVCTESGWRPLPSCEEKSCDNPYIPNGDYSPLRIKHRTGDEITYQCRNGFYPATRGNTAKCTSTGWIPAPRCTLKPCDYPDIKHGGLYHENMRRPYFPVAVGKYYSYYCDEHFETPSGSYWDHIHCTQDGWSPAVPCLRKCYFPYLENGYNQNYGRKFVQGKSIDVACHPGYALPKAQTTVTCMENGWSPTPRCIRVKTCSKSSIDIENGFISESQYTYALKEKAKYQCKLGYVTADGETSGSITCGKDGWSAQPTCIKSCDIPVFMNARTKNDFTWFKLNDTLDYECHDGYESNTGSTTGSIVCGYNGWSDLPICYERECELPKIDVHLVPDRKKDQYKVGEVLKFSCKPGFTIVGPNSVQCYHFGLSPDLPICKEQVQSCGPPPELLNGNVKEKTKEEYGHSEVVEYYCNPRFLMKGPNKIQCVDGEWTTLPVCIVEESTCGDIPELEHGWAQLSSPPYYYGDSVEFNCSESFTMIGHRSITCIHGVWTQLPQCVAIDKLKKCKSSNLIILEEHLKNKKEFDHNSNIRYRCRGKEGWIHTVCINGRWDPEVNCSMAQIQLCPPPPQIPNSHNMTTTLNYRDGEKVSVLCQENYLIQEGEEITCKDGRWQSIPLCVEKIPCSQPPQIEHGTINSSRSSQESYAHGTKLSYTCEGGFRISEENETTCYMGKWSSPPQCEGLPCKSPPEISHGVVAHMSDSYQYGEEVTYKCFEGFGIDGPAIAKCLGEKWSHPPSCIKTDCLSLPSFENAIPMGEKKDVYKAGEQVTYTCATYYKMDGASNVTCINSRWTGRPTCRDTSCVNPPTVQNAYIVSRQMSKYPSGERVRYQCRSPYEMFGDEEVMCLNGNWTEPPQCKDSTGKCGPPPPIDNGDITSFPLSVYAPASSVEYQCQNLYQLEGNKRITCRNGQWSEPPKCLHPCVISREIMENYNIALRWTAKQKLYSRTGESVEFVCKRGYRLSSRSHTLRTTCWDGKLEYPTCAKR.

The first 18 residues, 1-18, serve as a signal peptide directing secretion; that stretch reads MRLLAKIICLMLWAICVA. Sushi domains follow at residues 19–82, 83–143, 144–207, 208–264, 265–322, 324–386, 387–444, 446–507, 515–566, 567–625, 628–686, 689–746, 751–805, 809–866, 868–928, 929–986, 987–1045, 1046–1104, 1107–1165, and 1170–1230; these read EDCN…KCQK, RPCG…ICEV, VKCL…KCVE, ISCK…SCEE, KSCD…RCTL, PCDY…VPCL, RKCY…RCIR, KTCS…TCIK, MNAR…ICYE, RECE…ICKE, QSCG…VCIV, STCG…QCVA, KKCK…NCSM, QLCP…LCVE, IPCS…QCEG, LPCK…SCIK, TDCL…TCRD, TSCV…QCKD, GKCG…KCLH, and SREI…TCAK. 40 cysteine pairs are disulfide-bonded: Cys21–Cys66, Cys52–Cys80, Cys85–Cys129, Cys114–Cys141, Cys146–Cys192, Cys178–Cys205, Cys210–Cys251, Cys237–Cys262, Cys267–Cys309, Cys294–Cys320, Cys325–Cys374, Cys357–Cys385, Cys389–Cys431, Cys416–Cys442, Cys448–Cys494, Cys477–Cys505, Cys509–Cys553, Cys536–Cys564, Cys569–Cys611, Cys597–Cys623, Cys630–Cys673, Cys659–Cys684, Cys691–Cys733, Cys719–Cys744, Cys753–Cys792, Cys781–Cys803, Cys811–Cys853, Cys839–Cys864, Cys870–Cys915, Cys901–Cys926, Cys931–Cys973, Cys959–Cys984, Cys989–Cys1032, Cys1018–Cys1043, Cys1048–Cys1091, Cys1077–Cys1102, Cys1109–Cys1152, Cys1138–Cys1163, Cys1167–Cys1218, and Cys1201–Cys1228. Asn217 carries N-linked (GlcNAc...) (complex) asparagine glycosylation. A glycan (N-linked (GlcNAc...) asparagine) is linked at Asn529. An N-linked (GlcNAc...) asparagine glycan is attached at Asn718. N-linked (GlcNAc...) asparagine glycosylation is found at Asn802 and Asn822. N-linked (GlcNAc...) (complex) asparagine glycosylation is found at Asn882 and Asn911. Asn1029 is a glycosylation site (N-linked (GlcNAc...) (complex) asparagine). N-linked (GlcNAc...) asparagine glycosylation is present at Asn1095.

As to quaternary structure, homodimer. Also forms homooligomers. Interacts with complement protein C3b; this interaction inhibits complement activation. Interacts with complement protein C3d. Interacts with CR3/ITGAM; this interaction mediates adhesion of neutrophils to pathogens leading to pathogen clearance. Interacts with complement factor I. In terms of assembly, (Microbial infection) Interacts with West nile virus non-structural protein 1 (NS1); this interaction leads to the degradation of C3. (Microbial infection) Interacts with C.albicans GPD2; the interaction is direct and leads to the degradation of C3 which enables the pathogen to evade the host innate immune system. As to quaternary structure, (Microbial infection) Interacts with Neisseria meningitidis protein fHbp. In terms of assembly, (Microbial infection) Interacts with Borrelia burgdorferi outer surface protein E/OspE; this interaction recruits complement regulator factor H onto the bacterial surface to evade complement-mediated cell lysis. (Microbial infection) Interacts with Streptococcus pneumoniae protein virulence factor choline-binding protein A/CbpAN; this interaction enables Streptococcus pneumoniae to evade surveillance by human complement system. As to quaternary structure, (Microbial infection) Interacts with Staphylococcus aureus surface protein serine-aspartate repeat protein E/SdrE; this interaction sequesters CFH on the surface of S.aureus for complement evasion. In terms of assembly, (Microbial infection) Interacts with Staphylococcus aureus protein Sbi; this interaction inhibits the complement activation of the alternative pathway. (Microbial infection) Interacts (via sushi 4-6 domains) with P.falciparum surface protein PF92; the interaction recruits CFH onto the merozoite surface preventing complement-mediated cell lysis. The interaction does not affect CFH activity. Interacts (via sushi 6-7 domains) with P.falciparum (strain NF54) GAP50; the interaction occurs in the vector mosquito midgut at the surface of the activated parasite gametocytes; the interaction protects the parasite from alternative complement pathway-mediated elimination. As to quaternary structure, (Microbial infection) Interacts (via sushi 4-6 domains) with P.falciparum surface protein PF92; the interaction recruits FHL-1 isoform onto the merozoite surface preventing complement-mediated cell lysis. The interaction does not affect FHL-1 isoform activity. Interacts (via sushi 6-7 domains) with P.falciparum (strain NF54) GAP50; the interaction occurs in the vector mosquito midgut at the surface of the activated parasite gametocytes; the interaction protects the parasite from alternative complement pathway-mediated elimination. Sulfated on tyrosine residues. In terms of processing, according to a report, Asn-217 is not glycosylated. Another study observed glycosylation at this position. In terms of tissue distribution, expressed in the retinal pigment epithelium (at protein level). CFH is one of the most abundant complement components in blood where the liver is the major source of CFH protein in vivo. in addition, CFH is secreted by additional cell types including monocytes, fibroblasts, or endothelial cells.

It is found in the secreted. Glycoprotein that plays an essential role in maintaining a well-balanced immune response by modulating complement activation. Acts as a soluble inhibitor of complement, where its binding to self markers such as glycan structures prevents complement activation and amplification on cell surfaces. Accelerates the decay of the complement alternative pathway (AP) C3 convertase C3bBb, thus preventing local formation of more C3b, the central player of the complement amplification loop. As a cofactor of the serine protease factor I, CFH also regulates proteolytic degradation of already-deposited C3b. In addition, mediates several cellular responses through interaction with specific receptors. For example, interacts with CR3/ITGAM receptor and thereby mediates the adhesion of human neutrophils to different pathogens. In turn, these pathogens are phagocytosed and destroyed. In terms of biological role, (Microbial infection) In the mosquito midgut, binds to the surface of parasite P.falciparum gametocytes and protects the parasite from alternative complement pathway-mediated elimination. The sequence is that of Complement factor H (CFH) from Homo sapiens (Human).